Consider the following 207-residue polypeptide: MLRSLVQNPRVRARVLERVDEFRLNNLSNEEVWFRELTLCLLTANSSFISAYQALNCLGDKIYYANEEVIRSILKSCKYRFYNLKAKYIIMAREKVYGKLKEEITPLADSDQQLAREKLLNIKGIGMKEASHFLRNVGYFDLAIIDRHLIDFMRRIGAIGEINVKHLSKSRYISLESVLKSIALNLNISVGILDLFIWYKETNTIVK.

Residues Lys128 and Asp146 contribute to the active site.

This sequence belongs to the type-2 OGG1 family.

The catalysed reaction is 2'-deoxyribonucleotide-(2'-deoxyribose 5'-phosphate)-2'-deoxyribonucleotide-DNA = a 3'-end 2'-deoxyribonucleotide-(2,3-dehydro-2,3-deoxyribose 5'-phosphate)-DNA + a 5'-end 5'-phospho-2'-deoxyribonucleoside-DNA + H(+). Its function is as follows. Catalyzes the excision of an oxidatively damaged form of guanine (7,8-dihydro-8-oxoguanine = 8-oxoG) from DNA. Also cleaves the DNA backbone at apurinic/apyrimidinic sites (AP sites). This Saccharolobus islandicus (strain Y.N.15.51 / Yellowstone #2) (Sulfolobus islandicus) protein is 8-oxoguanine DNA glycosylase/AP lyase.